Reading from the N-terminus, the 142-residue chain is ATP synthase epsilon chain (142 aa).

This sequence belongs to the ATPase epsilon chain family. As to quaternary structure, F-type ATPases have 2 components, CF(1) - the catalytic core - and CF(0) - the membrane proton channel. CF(1) has five subunits: alpha(3), beta(3), gamma(1), delta(1), epsilon(1). CF(0) has three main subunits: a, b and c.

The protein localises to the cell inner membrane. In terms of biological role, produces ATP from ADP in the presence of a proton gradient across the membrane. The protein is ATP synthase epsilon chain of Shewanella denitrificans (strain OS217 / ATCC BAA-1090 / DSM 15013).